Reading from the N-terminus, the 132-residue chain is Small ribosomal subunit protein uS9 (132 aa).

Belongs to the universal ribosomal protein uS9 family.

This chain is Small ribosomal subunit protein uS9, found in Blochmanniella pennsylvanica (strain BPEN).